The sequence spans 116 residues: Large ribosomal subunit protein eL30 (116 aa).

It belongs to the eukaryotic ribosomal protein eL30 family. As to quaternary structure, component of the large ribosomal subunit.

The protein localises to the cytoplasm. Its function is as follows. Component of the large ribosomal subunit. The ribosome is a large ribonucleoprotein complex responsible for the synthesis of proteins in the cell. This is Large ribosomal subunit protein eL30 (rpl30) from Ictalurus punctatus (Channel catfish).